A 308-amino-acid polypeptide reads, in one-letter code: U-box domain-containing protein 54 (308 aa).

The interval 172-235 (FSEFSTSAEK…NESDEDPRLE (64 aa)) is disordered. Residues 210–227 (ESPKKGRKETIEKSKSNE) show a composition bias toward basic and acidic residues. In terms of domain architecture, U-box spans 232-306 (PRLEDFKCPI…KDWLEKNPNY (75 aa)).

The catalysed reaction is S-ubiquitinyl-[E2 ubiquitin-conjugating enzyme]-L-cysteine + [acceptor protein]-L-lysine = [E2 ubiquitin-conjugating enzyme]-L-cysteine + N(6)-ubiquitinyl-[acceptor protein]-L-lysine.. The protein operates within protein modification; protein ubiquitination. In terms of biological role, functions as an E3 ubiquitin ligase. The polypeptide is U-box domain-containing protein 54 (PUB54) (Arabidopsis thaliana (Mouse-ear cress)).